Here is a 192-residue protein sequence, read N- to C-terminus: MNAIWIAVAAVSLLALAFGAILGYASRRFAVEDDPVVEKIDEILPQSQCGQCGYPGCRPYAEAISCNGEKINRCAPGGEAVMLKIAELLNVEPQPLDGEAQELTPARMVAVIDENNCIGCTKCIQACPVDAIVGATRAMHTVMSDLCTGCNLCVDPCPTHCISLQPVAETPDSWKWDLNTIPVRIIPVEHHA.

Residues 1-26 form a hydrophobic region; the sequence is MNAIWIAVAAVSLLALAFGAILGYAS. Residues 32-91 enclose the 4Fe-4S domain; it reads EDDPVVEKIDEILPQSQCGQCGYPGCRPYAEAISCNGEKINRCAPGGEAVMLKIAELLNV. [4Fe-4S] cluster-binding residues include Cys-49, Cys-52, Cys-57, Cys-74, Cys-117, Cys-120, Cys-123, Cys-127, Cys-147, Cys-150, Cys-153, and Cys-157. 2 consecutive 4Fe-4S ferredoxin-type domains span residues 108 to 137 and 138 to 167; these read MVAV…GATR and AMHT…LQPV.

Belongs to the 4Fe4S bacterial-type ferredoxin family. RnfB subfamily. As to quaternary structure, the complex is composed of six subunits: RsxA, RsxB, RsxC, RsxD, RsxE and RsxG. [4Fe-4S] cluster serves as cofactor.

The protein localises to the cell inner membrane. Its function is as follows. Part of a membrane-bound complex that couples electron transfer with translocation of ions across the membrane. Required to maintain the reduced state of SoxR. This is Ion-translocating oxidoreductase complex subunit B from Escherichia coli O81 (strain ED1a).